Consider the following 245-residue polypeptide: Ribonuclease PH (245 aa).

Phosphate contacts are provided by residues Arg86 and 124–126 (GTR).

It belongs to the RNase PH family. Homohexameric ring arranged as a trimer of dimers. It has been suggested that the active form is the dimer which binds tRNA and that the hexameric form protects the substrate recognition loop (approximately residues 65-82) from proteolysis.

The enzyme catalyses tRNA(n+1) + phosphate = tRNA(n) + a ribonucleoside 5'-diphosphate. Functionally, phosphorolytic 3'-5' exoribonuclease that plays an important role in tRNA 3'-end maturation. Removes nucleotide residues following the 3'-CCA terminus of tRNAs; can also add nucleotides to the ends of RNA molecules by using nucleoside diphosphates as substrates, but this may not be physiologically important. Probably plays a role in initiation of 16S rRNA degradation (leading to ribosome degradation) during starvation. Plays a role in the secondary pathway of 23S rRNA 3' end maturation. This Bacillus subtilis (strain 168) protein is Ribonuclease PH.